Reading from the N-terminus, the 205-residue chain is Ras-related protein RABB1a (205 aa).

13–20 (GDTGVGKS) serves as a coordination point for GTP. The Effector region signature appears at 35–43 (HDLTIGVEF). Residues 61 to 65 (DTAGQ), 119 to 122 (NKCD), and 149 to 150 (SA) each bind GTP. Residues 179–205 (ANEPGITPGPFGGKDASSSQQRRGCCG) are disordered. Positions 194–205 (ASSSQQRRGCCG) are enriched in polar residues. 2 S-geranylgeranyl cysteine lipidation sites follow: Cys-203 and Cys-204.

Belongs to the small GTPase superfamily. Rab family.

Its subcellular location is the cell membrane. In terms of biological role, intracellular vesicle trafficking and protein transport. The protein is Ras-related protein RABB1a (RABB1A) of Arabidopsis thaliana (Mouse-ear cress).